The following is a 310-amino-acid chain: Olfactory receptor 5P52 (310 aa).

Topologically, residues 1–25 (MEAENHTTVAELIILGLTEDPKLCI) are extracellular. Asn5 is a glycosylation site (N-linked (GlcNAc...) asparagine). A helical membrane pass occupies residues 26 to 46 (VFFVIFLGVYIITLVGNISII). The Cytoplasmic portion of the chain corresponds to 47–54 (TLIRISSQ). Residues 55 to 75 (LHTPMYLFLSHLAFVDIVFST) traverse the membrane as a helical segment. The Extracellular segment spans residues 76-99 (SVSVIMLMELLGHGLVLSVATCAA). Cys97 and Cys189 are disulfide-bonded. The helical transmembrane segment at 100 to 120 (QLCMTVSFGSAECFLLAAMAY) threads the bilayer. Residues 121–133 (DRYVAICSPLLYS) are Cytoplasmic-facing. Residues 134-154 (TLMSSRVCFLLLGISYVGGFV) traverse the membrane as a helical segment. The Extracellular segment spans residues 155-196 (NGWTFTGCVLSLSFCGPTQINHFFCDFSPLLKVSCSDVSIIG). Residues 197–217 (IIPSISSGSIIVVTVFVIAVS) traverse the membrane as a helical segment. Topologically, residues 218–237 (YIYILITILKMRSTEGRHKA) are cytoplasmic. Residues 238–258 (FSTCTSHLTAVTLFYGTITVI) form a helical membrane-spanning segment. Over 259–271 (YVMPKSSYSTEQN) the chain is Extracellular. Residues 272 to 292 (KVISLFYTVVIPMLNPLIYSL) traverse the membrane as a helical segment. Over 293 to 310 (RNRDVKDALRKAIVRVYS) the chain is Cytoplasmic.

The protein belongs to the G-protein coupled receptor 1 family.

The protein localises to the cell membrane. Its function is as follows. Potential odorant receptor. This is Olfactory receptor 5P52 from Mus musculus (Mouse).